The sequence spans 223 residues: Cutinase 4 (223 aa).

The N-terminal stretch at 1–26 (MPLPLLPPLLLPLEALLDLALHLVDS) is a signal peptide. C60 and C133 are disulfide-bonded. S144 acts as the Nucleophile in catalysis. C187 and C194 are disulfide-bonded. The active site involves D191. H203 functions as the Proton donor/acceptor in the catalytic mechanism.

It belongs to the cutinase family. In terms of processing, the 2 disulfide bonds play a critical role in holding the catalytic residues in juxta-position; reduction of the disulfide bridges results in the complete inactivation of the enzyme.

It is found in the secreted. It catalyses the reaction cutin + H2O = cutin monomers.. Its function is as follows. Catalyzes the hydrolysis of complex carboxylic polyesters found in the cell wall of plants. Degrades cutin, a macromolecule that forms the structure of the plant cuticle. Also degrades suberin, a specialized macromolecule found in the cell wall of various plant tissues. This chain is Cutinase 4, found in Emericella nidulans (strain FGSC A4 / ATCC 38163 / CBS 112.46 / NRRL 194 / M139) (Aspergillus nidulans).